A 103-amino-acid chain; its full sequence is Small ribosomal subunit protein uS10 (103 aa).

The protein belongs to the universal ribosomal protein uS10 family. Part of the 30S ribosomal subunit.

In terms of biological role, involved in the binding of tRNA to the ribosomes. This is Small ribosomal subunit protein uS10 from Hahella chejuensis (strain KCTC 2396).